The chain runs to 413 residues: Alpha-1-antitrypsin 1-2 (413 aa).

Residues 1-24 (MTPSISWGLLLLAGLCCMVPSFLA) form the signal peptide. Asn64, Asn101, and Asn265 each carry an N-linked (GlcNAc...) asparagine glycan. Residues 368–387 (AATVFEAVPMSMPPILRFDH) form an RCL region.

Belongs to the serpin family.

Its subcellular location is the secreted. Its function is as follows. Inhibitor of serine proteases. Its primary target is elastase, but it also has a moderate affinity for plasmin and thrombin. The sequence is that of Alpha-1-antitrypsin 1-2 (Serpina1b) from Mus musculus (Mouse).